A 388-amino-acid polypeptide reads, in one-letter code: Xylose isomerase (388 aa).

Catalysis depends on residues histidine 54 and aspartate 57. Mg(2+) is bound by residues glutamate 181, glutamate 217, histidine 220, aspartate 245, aspartate 255, aspartate 257, and aspartate 287.

It belongs to the xylose isomerase family. As to quaternary structure, homotetramer. The cofactor is Mg(2+).

It localises to the cytoplasm. The catalysed reaction is alpha-D-xylose = alpha-D-xylulofuranose. Functionally, involved in D-xylose catabolism. The polypeptide is Xylose isomerase (xylA) (Streptomyces murinus).